Consider the following 213-residue polypeptide: Charged multivesicular body protein 2b (213 aa).

A2 is subject to N-acetylalanine. The stretch at 25–55 forms a coiled coil; that stretch reads QRAIIRDRAALEKQEKQLELEIKKMAKIGNK. Residues 179 to 194 are compositionally biased toward low complexity; the sequence is AKAPSAARSLPSASTS. Residues 179–199 are disordered; it reads AKAPSAARSLPSASTSKATIS. The residue at position 199 (S199) is a Phosphoserine. The MIT-interacting motif motif lies at 201–211; that stretch reads EEIERQLKALG.

This sequence belongs to the SNF7 family. In terms of assembly, probable core component of the endosomal sorting required for transport complex III (ESCRT-III). ESCRT-III components are thought to multimerize to form a flat lattice on the perimeter membrane of the endosome. Several assembly forms of ESCRT-III may exist that interact and act sequentially. Interacts with CHMP2A. Interacts with VPS4A. Interacts with VPS4B; the interaction is direct. In terms of tissue distribution, in brain, it is expressed in all neuronal populations with a relatively enhanced expression in the hippocampus, frontal and temporal lobes and in both granule and Purkinje cells of the cerebellum. Not expressed in astrocytes or oligodendrocytes.

It localises to the cytoplasm. The protein resides in the cytosol. Its subcellular location is the late endosome membrane. Functionally, probable core component of the endosomal sorting required for transport complex III (ESCRT-III) which is involved in multivesicular bodies (MVBs) formation and sorting of endosomal cargo proteins into MVBs. MVBs contain intraluminal vesicles (ILVs) that are generated by invagination and scission from the limiting membrane of the endosome and mostly are delivered to lysosomes enabling degradation of membrane proteins, such as stimulated growth factor receptors, lysosomal enzymes and lipids. The MVB pathway appears to require the sequential function of ESCRT-O, -I,-II and -III complexes. ESCRT-III proteins mostly dissociate from the invaginating membrane before the ILV is released. The ESCRT machinery also functions in topologically equivalent membrane fission events, such as the terminal stages of cytokinesis. ESCRT-III proteins are believed to mediate the necessary vesicle extrusion and/or membrane fission activities, possibly in conjunction with the AAA ATPase VPS4. The protein is Charged multivesicular body protein 2b (Chmp2b) of Mus musculus (Mouse).